Consider the following 188-residue polypeptide: Segregation and condensation protein B (188 aa).

This sequence belongs to the ScpB family. Homodimer. Homodimerization may be required to stabilize the binding of ScpA to the Smc head domains. Component of a cohesin-like complex composed of ScpA, ScpB and the Smc homodimer, in which ScpA and ScpB bind to the head domain of Smc. The presence of the three proteins is required for the association of the complex with DNA.

It localises to the cytoplasm. In terms of biological role, participates in chromosomal partition during cell division. May act via the formation of a condensin-like complex containing Smc and ScpA that pull DNA away from mid-cell into both cell halves. This Lactococcus lactis subsp. lactis (strain IL1403) (Streptococcus lactis) protein is Segregation and condensation protein B.